The chain runs to 186 residues: Ribosome-recycling factor (186 aa).

Belongs to the RRF family.

Its subcellular location is the cytoplasm. Responsible for the release of ribosomes from messenger RNA at the termination of protein biosynthesis. May increase the efficiency of translation by recycling ribosomes from one round of translation to another. The chain is Ribosome-recycling factor from Rickettsia africae (strain ESF-5).